A 204-amino-acid polypeptide reads, in one-letter code: Large ribosomal subunit protein uL4 (204 aa).

The disordered stretch occupies residues Lys49 to Ser76.

It belongs to the universal ribosomal protein uL4 family. Part of the 50S ribosomal subunit.

Its function is as follows. One of the primary rRNA binding proteins, this protein initially binds near the 5'-end of the 23S rRNA. It is important during the early stages of 50S assembly. It makes multiple contacts with different domains of the 23S rRNA in the assembled 50S subunit and ribosome. In terms of biological role, forms part of the polypeptide exit tunnel. The protein is Large ribosomal subunit protein uL4 of Wolbachia sp. subsp. Drosophila simulans (strain wRi).